Here is a 184-residue protein sequence, read N- to C-terminus: Adenine phosphoribosyltransferase (184 aa).

It belongs to the purine/pyrimidine phosphoribosyltransferase family. Homodimer.

It is found in the cytoplasm. It catalyses the reaction AMP + diphosphate = 5-phospho-alpha-D-ribose 1-diphosphate + adenine. Its pathway is purine metabolism; AMP biosynthesis via salvage pathway; AMP from adenine: step 1/1. Its function is as follows. Catalyzes a salvage reaction resulting in the formation of AMP, that is energically less costly than de novo synthesis. The chain is Adenine phosphoribosyltransferase from Blochmanniella pennsylvanica (strain BPEN).